A 243-amino-acid chain; its full sequence is NAD-dependent protein deacylase (243 aa).

The region spanning 1–234 is the Deacetylase sirtuin-type domain; that stretch reads MYQHIVVLTG…PKLVDTILAG (234 aa). 10-29 provides a ligand contact to NAD(+); it reads GAGISAESGLRTFRDQDGLW. Substrate-binding residues include tyrosine 54 and arginine 57. 91-94 lines the NAD(+) pocket; sequence QNID. Catalysis depends on histidine 109, which acts as the Proton acceptor. Cysteine 117 and cysteine 136 together coordinate Zn(2+). NAD(+) is bound by residues 176–178, 202–204, and alanine 220; these read GTS and NLQ.

Belongs to the sirtuin family. Class III subfamily. The cofactor is Zn(2+).

It is found in the cytoplasm. The catalysed reaction is N(6)-acetyl-L-lysyl-[protein] + NAD(+) + H2O = 2''-O-acetyl-ADP-D-ribose + nicotinamide + L-lysyl-[protein]. The enzyme catalyses N(6)-succinyl-L-lysyl-[protein] + NAD(+) + H2O = 2''-O-succinyl-ADP-D-ribose + nicotinamide + L-lysyl-[protein]. Functionally, NAD-dependent lysine deacetylase and desuccinylase that specifically removes acetyl and succinyl groups on target proteins. Modulates the activities of several proteins which are inactive in their acylated form. This chain is NAD-dependent protein deacylase, found in Shewanella oneidensis (strain ATCC 700550 / JCM 31522 / CIP 106686 / LMG 19005 / NCIMB 14063 / MR-1).